We begin with the raw amino-acid sequence, 1326 residues long: Putative late blight resistance protein homolog R1B-19 (1326 aa).

Coiled coils occupy residues 421-444 (RYSDSLAFLKNQLQVIQTEFESLQ) and 536-558 (PRMKEEIVGFEDIIENLRKKLLN). 570–577 (GMPGLGKT) contacts ATP. The NB-ARC domain occupies 611–864 (LLSLLCDTIG…KVKTCRLHDV (254 aa)). Positions 749–770 (SEMEKEVECWEQVANNLGTRIH) form a coiled coil. 9 LRR repeats span residues 953–978 (FKFLKVLDLEHQVFIDFIPTELVYLK), 980–996 (FSAHIKQNSIPSSIYNL), 1027–1050 (LRHLYIPDFSTENEEALLENSAKL), 1053–1070 (LETLSTPYFSRYHVLNFP), 1071–1094 (IRLEILKLYRSKAFKTIPFCISAP), 1098–1118 (YLKLSGFYLDSQYLSETADHL), 1119–1146 (KNLEVLKLYYVEFGDHREWKVSNGMFPQ), 1167–1191 (FPNLEQLYIKVENCNELVVKSAMNI), and 1208–1230 (LIEKKTLKLNLSHDEDIPKAFKR). The region spanning 1209 to 1278 (IEKKTLKLNL…AWHARVVVPT (70 aa)) is the HMA domain.

Belongs to the disease resistance NB-LRR family.

The protein resides in the cytoplasm. It localises to the membrane. In terms of biological role, confers resistance to late blight (Phytophthora infestans) races carrying the avirulence gene Avr1. Resistance proteins guard the plant against pathogens that contain an appropriate avirulence protein via an indirect interaction with this avirulence protein. That triggers a defense system including the hypersensitive response, which restricts the pathogen growth. The chain is Putative late blight resistance protein homolog R1B-19 (R1B-19) from Solanum demissum (Wild potato).